The primary structure comprises 519 residues: Importin subunit alpha-9 (519 aa).

The tract at residues 1 to 29 is disordered; that stretch reads MADDGSASNRRDPIKSSVGNVAGQRRRKQ. 8 ARM repeats span residues 116–156, 158–197, 200–239, 244–283, 286–326, 335–374, 377–416, and 429–468; these read FPPV…NIAA, KPEE…NVAG, EDLR…NLIK, KAAA…YLSA, DIAT…NFVA, ILIR…NIAA, IEHK…NLCV, and QEHL…LVLR.

It belongs to the importin alpha family. In terms of assembly, forms a complex with importin subunit beta-1.

Its subcellular location is the nucleus envelope. Functionally, binds to conventional NLS motifs and mediates nuclear protein import across the nuclear envelope. Acts as a cellular receptor for the nuclear import of the virD2 protein of Agrobacterium, but is not essential for Agrobacterium-mediated root transformation. The sequence is that of Importin subunit alpha-9 from Arabidopsis thaliana (Mouse-ear cress).